The following is a 353-amino-acid chain: Photosystem II protein D1 (353 aa).

Thr-2 carries the post-translational modification N-acetylthreonine. A Phosphothreonine modification is found at Thr-2. 3 consecutive transmembrane segments (helical) span residues 29 to 46 (YIGW…TATS), 118 to 133 (HFLL…EWEL), and 142 to 156 (WIAV…AAAA). A chlorophyll a-binding site is contributed by His-118. Tyr-126 is a pheophytin a binding site. [CaMn4O5] cluster contacts are provided by Asp-170 and Glu-189. Residues 197–218 (FHMLGVAGVFGGSLFSAMHGSL) traverse the membrane as a helical segment. His-198 is a binding site for chlorophyll a. A quinone is bound by residues His-215 and 264–265 (SF). Position 215 (His-215) interacts with Fe cation. His-272 provides a ligand contact to Fe cation. Residues 274-288 (FLAAWPVVGIWFTAL) traverse the membrane as a helical segment. His-332, Glu-333, Asp-342, and Ala-344 together coordinate [CaMn4O5] cluster. Positions 345–353 (SVDAPSING) are excised as a propeptide.

The protein belongs to the reaction center PufL/M/PsbA/D family. As to quaternary structure, PSII is composed of 1 copy each of membrane proteins PsbA, PsbB, PsbC, PsbD, PsbE, PsbF, PsbH, PsbI, PsbJ, PsbK, PsbL, PsbM, PsbT, PsbX, PsbY, PsbZ, Psb30/Ycf12, at least 3 peripheral proteins of the oxygen-evolving complex and a large number of cofactors. It forms dimeric complexes. The cofactor is The D1/D2 heterodimer binds P680, chlorophylls that are the primary electron donor of PSII, and subsequent electron acceptors. It shares a non-heme iron and each subunit binds pheophytin, quinone, additional chlorophylls, carotenoids and lipids. D1 provides most of the ligands for the Mn4-Ca-O5 cluster of the oxygen-evolving complex (OEC). There is also a Cl(-1) ion associated with D1 and D2, which is required for oxygen evolution. The PSII complex binds additional chlorophylls, carotenoids and specific lipids.. Tyr-161 forms a radical intermediate that is referred to as redox-active TyrZ, YZ or Y-Z. In terms of processing, C-terminally processed by CTPA; processing is essential to allow assembly of the oxygen-evolving complex and thus photosynthetic growth.

It is found in the plastid. The protein localises to the chloroplast thylakoid membrane. The enzyme catalyses 2 a plastoquinone + 4 hnu + 2 H2O = 2 a plastoquinol + O2. Its function is as follows. Photosystem II (PSII) is a light-driven water:plastoquinone oxidoreductase that uses light energy to abstract electrons from H(2)O, generating O(2) and a proton gradient subsequently used for ATP formation. It consists of a core antenna complex that captures photons, and an electron transfer chain that converts photonic excitation into a charge separation. The D1/D2 (PsbA/PsbD) reaction center heterodimer binds P680, the primary electron donor of PSII as well as several subsequent electron acceptors. The protein is Photosystem II protein D1 of Adiantum capillus-veneris (Maidenhair fern).